The following is a 342-amino-acid chain: SWR1-complex protein 5 (342 aa).

Disordered stretches follow at residues 1–126 (MAPT…PVTI), 142–178 (PRTS…DPDS), and 214–238 (LGEN…RMPR). 2 stretches are compositionally biased toward acidic residues: residues 8 to 20 (LAED…DSDF) and 33 to 43 (ISDDDDEEAGE). Basic residues predominate over residues 78 to 87 (GEKRQKKTKT). The BCNT-C domain occupies 260-341 (NLSMASRLQA…RRARMAQAGK (82 aa)).

Belongs to the SWC5 family. As to quaternary structure, component of the SWR1 chromatin remodeling complex.

It localises to the nucleus. Its function is as follows. Component of the SWR1 complex which mediates the ATP-dependent exchange of histone H2A for the H2A variant H2A.Z leading to transcriptional regulation of selected genes by chromatin remodeling. Involved in chromosome stability. This is SWR1-complex protein 5 (crc-2) from Neurospora crassa (strain ATCC 24698 / 74-OR23-1A / CBS 708.71 / DSM 1257 / FGSC 987).